A 118-amino-acid chain; its full sequence is V-type proton ATPase subunit G 1 (118 aa).

A2 is subject to N-acetylalanine. A disordered region spans residues 55–90; the sequence is FQSKQQAAMGSQGNLSAEVEQATRRQVQGMQSSQQR. 2 stretches are compositionally biased toward polar residues: residues 56-69 and 78-89; these read QSKQQAAMGSQGNL and RRQVQGMQSSQQ.

This sequence belongs to the V-ATPase G subunit family. As to quaternary structure, V-ATPase is a heteromultimeric enzyme made up of two complexes: the ATP-hydrolytic V1 complex and the proton translocation V0 complex. The V1 complex consists of three catalytic AB heterodimers that form a heterohexamer, three peripheral stalks each consisting of EG heterodimers, one central rotor including subunits D and F, and the regulatory subunits C and H. The proton translocation complex V0 consists of the proton transport subunit a, a ring of proteolipid subunits c9c'', rotary subunit d, subunits e and f, and the accessory subunits ATP6AP1/Ac45 and ATP6AP2/PRR.

The protein localises to the apical cell membrane. In terms of biological role, subunit of the V1 complex of vacuolar(H+)-ATPase (V-ATPase), a multisubunit enzyme composed of a peripheral complex (V1) that hydrolyzes ATP and a membrane integral complex (V0) that translocates protons. V-ATPase is responsible for acidifying and maintaining the pH of intracellular compartments and in some cell types, is targeted to the plasma membrane, where it is responsible for acidifying the extracellular environment. In aerobic conditions, involved in intracellular iron homeostasis, thus triggering the activity of Fe(2+) prolyl hydroxylase (PHD) enzymes, and leading to HIF1A hydroxylation and subsequent proteasomal degradation. The chain is V-type proton ATPase subunit G 1 (ATP6V1G1) from Canis lupus familiaris (Dog).